The chain runs to 163 residues: Ribosome maturation factor RimP (163 aa).

Belongs to the RimP family.

The protein resides in the cytoplasm. Required for maturation of 30S ribosomal subunits. The polypeptide is Ribosome maturation factor RimP (Polynucleobacter asymbioticus (strain DSM 18221 / CIP 109841 / QLW-P1DMWA-1) (Polynucleobacter necessarius subsp. asymbioticus)).